Consider the following 298-residue polypeptide: Max-like protein X (298 aa).

Residues 1-63 are disordered; the sequence is MTEPGASPED…ARGCREDSSH (63 aa). S7 bears the Phosphoserine mark. A compositionally biased stretch (basic residues) spans 28 to 37; that stretch reads GRARARRGSG. 5 positions are modified to phosphoserine: S45, S48, S74, S77, and S98. The span at 98 to 109 shows a compositional bias: polar residues; that stretch reads SIGSTSASSVPN. Residues 98–119 form a disordered region; it reads SIGSTSASSVPNTDDEDSDYQQ. A bHLH domain is found at 129–187; that stretch reads RRRRAHTQAEQKRRDAIKRGYDDLQTIVPTCQQQDFSIGSQKLSKAIVLQKTIDYIQFL. The leucine-zipper stretch occupies residues 194 to 214; it reads QEEEVSTLRKDVTALKIMKVN.

Efficient DNA binding requires dimerization with another bHLH protein. Binds DNA as a heterodimer with MAD1, MAD4, MNT, WBSCR14 and MLXIP. Can also bind DNA as a homodimer. In terms of tissue distribution, expressed in all tissues examined: stomach, duodenum, jejunum, ileum, colon, liver, pancreas, salivary gland, kidney, spleen, lung, heart, skeletal muscle, brain, ovary and testis.

The protein resides in the cytoplasm. The protein localises to the nucleus. Transcription regulator. Forms a sequence-specific DNA-binding protein complex with MAD1, MAD4, MNT, WBSCR14 and MLXIP which recognizes the core sequence 5'-CACGTG-3'. The TCFL4-MAD1, TCFL4-MAD4, TCFL4-WBSCR14 complexes are transcriptional repressors. Plays a role in transcriptional activation of glycolytic target genes. Involved in glucose-responsive gene regulation. This is Max-like protein X (Mlx) from Mus musculus (Mouse).